Here is a 476-residue protein sequence, read N- to C-terminus: Bifunctional protein HldE (476 aa).

Residues 1 to 318 (MLSKKPNILV…EYESSLHKSN (318 aa)) form a ribokinase region. Residue 195-198 (NKKE) participates in ATP binding. The active site involves Asp263. The interval 345 to 476 (FTNGCFDILH…RIQENEKCNN (132 aa)) is cytidylyltransferase.

It in the N-terminal section; belongs to the carbohydrate kinase PfkB family. This sequence in the C-terminal section; belongs to the cytidylyltransferase family. In terms of assembly, homodimer.

The enzyme catalyses D-glycero-beta-D-manno-heptose 7-phosphate + ATP = D-glycero-beta-D-manno-heptose 1,7-bisphosphate + ADP + H(+). It catalyses the reaction D-glycero-beta-D-manno-heptose 1-phosphate + ATP + H(+) = ADP-D-glycero-beta-D-manno-heptose + diphosphate. It functions in the pathway nucleotide-sugar biosynthesis; ADP-L-glycero-beta-D-manno-heptose biosynthesis; ADP-L-glycero-beta-D-manno-heptose from D-glycero-beta-D-manno-heptose 7-phosphate: step 1/4. It participates in nucleotide-sugar biosynthesis; ADP-L-glycero-beta-D-manno-heptose biosynthesis; ADP-L-glycero-beta-D-manno-heptose from D-glycero-beta-D-manno-heptose 7-phosphate: step 3/4. In terms of biological role, catalyzes the phosphorylation of D-glycero-D-manno-heptose 7-phosphate at the C-1 position to selectively form D-glycero-beta-D-manno-heptose-1,7-bisphosphate. Functionally, catalyzes the ADP transfer from ATP to D-glycero-beta-D-manno-heptose 1-phosphate, yielding ADP-D-glycero-beta-D-manno-heptose. In Aliarcobacter butzleri (strain RM4018) (Arcobacter butzleri), this protein is Bifunctional protein HldE.